Consider the following 168-residue polypeptide: Bcl2-associated agonist of cell death (168 aa).

Met1 is subject to N-acetylmethionine. The segment at 1–105 (MFQIPEFEPS…RSRSAPPNLW (105 aa)) is disordered. Residue Ser25 is modified to Phosphoserine. The segment covering 49–60 (SHQQEQPTSSSH) has biased composition (polar residues). Ser75 and Ser91 each carry phosphoserine. Asymmetric dimethylarginine; by PRMT1 is present on residues Arg94 and Arg96. Ser97 is modified (phosphoserine). Ser99 is subject to Phosphoserine; by PKA, PKB, PAK1, RPS6KA1, RPS6KB1 and PKC/PRKCQ. Position 99 is a phosphoserine; by PKB/AKT1 (Ser99). Positions 110-124 (YGRELRRMSDEFVDS) match the BH3 motif. Ser118 and Ser134 each carry phosphoserine. The segment at 125-145 (FKKGLPRPKSAGTATQMRQSS) is disordered. The segment covering 136–145 (GTATQMRQSS) has biased composition (polar residues). The residue at position 161 (Arg161) is an Omega-N-methylarginine.

Belongs to the Bcl-2 family. As to quaternary structure, forms heterodimers with the anti-apoptotic proteins, Bcl-X(L), Bcl-2 and Bcl-W. Also binds protein S100A10. The Ser-75/Ser-99 phosphorylated form binds 14-3-3 proteins. Interacts with AKT1 and PIM3. Interacts (via BH3 domain) with NOL3 (via CARD domain); preventing the association of BAD with BCL2. Interacts with HIF3A (via C-terminus domain); the interaction reduces the binding between BAD and BAX. Interacts with GIMAP3/IAN4 and GIMAP5/IAN5. In terms of processing, phosphorylated on one or more of Ser-75, Ser-99, Ser-118 and Ser-134 in response to survival stimuli, which blocks its pro-apoptotic activity. Phosphorylation on Ser-99 or Ser-75 promotes heterodimerization with 14-3-3 proteins. This interaction then facilitates the phosphorylation at Ser-118, a site within the BH3 motif, leading to the release of Bcl-X(L) and the promotion of cell survival. Ser-99 is the major site of AKT/PKB phosphorylation, Ser-118 the major site of protein kinase A (CAPK) phosphorylation. Phosphorylation at Ser-99 by PKB/AKT1 is almost completely blocked by the apoptotic C-terminus cleavage product of PKN2 generated by caspases-3 activity during apoptosis. Methylation at Arg-94 and Arg-96 by PRMT1 inhibits Akt-mediated phosphorylation at Ser-99. As to expression, expressed in a wide variety of tissues.

It is found in the mitochondrion outer membrane. It localises to the cytoplasm. Promotes cell death. Successfully competes for the binding to Bcl-X(L), Bcl-2 and Bcl-W, thereby affecting the level of heterodimerization of these proteins with BAX. Can reverse the death repressor activity of Bcl-X(L), but not that of Bcl-2. Appears to act as a link between growth factor receptor signaling and the apoptotic pathways. The protein is Bcl2-associated agonist of cell death (BAD) of Homo sapiens (Human).